Reading from the N-terminus, the 445-residue chain is Phosphoglucosamine mutase (445 aa).

The active-site Phosphoserine intermediate is Ser-102. Residues Ser-102, Asp-241, Asp-243, and Asp-245 each contribute to the Mg(2+) site. Ser-102 carries the phosphoserine modification.

Belongs to the phosphohexose mutase family. Mg(2+) is required as a cofactor. Post-translationally, activated by phosphorylation.

The catalysed reaction is alpha-D-glucosamine 1-phosphate = D-glucosamine 6-phosphate. In terms of biological role, catalyzes the conversion of glucosamine-6-phosphate to glucosamine-1-phosphate. In Shigella flexneri serotype 5b (strain 8401), this protein is Phosphoglucosamine mutase.